The following is a 359-amino-acid chain: Insulin gene enhancer protein ISL-2 (359 aa).

2 consecutive LIM zinc-binding domains span residues 25 to 86 (AMCV…RLFG) and 87 to 149 (IKCA…LLER). Residues 151 to 190 (AAGSPRSPGPLPGARGLHLPDAGSGRQPSLRTHVHKQAEK) form a disordered region. Residues S154 and S157 each carry the phosphoserine modification. Positions 191–250 (TTRVRTVLNEKQLHTLRTCYAANPRPDALMKEQLVEMTGLSPRVIRVWFQNKRCKDKKKS) form a DNA-binding region, homeobox. An LIM-binding domain (LID) region spans residues 272 to 301 (GTPLVAGSPIRHENAVQGSAVEVQTYQPPW). A Phosphoserine modification is found at S279. Residues 326–336 (ESGSLGNSSGS) are compositionally biased toward low complexity. A disordered region spans residues 326–359 (ESGSLGNSSGSDVTSLSSQLPDTPNSMVPSPVET). Residues 337-359 (DVTSLSSQLPDTPNSMVPSPVET) show a composition bias toward polar residues.

Interacts with LHX4.

It is found in the nucleus. Functionally, transcriptional factor that defines subclasses of motoneurons that segregate into columns in the spinal cord and select distinct axon pathways. In Mus musculus (Mouse), this protein is Insulin gene enhancer protein ISL-2 (Isl2).